We begin with the raw amino-acid sequence, 327 residues long: tRNA uridine(34) hydroxylase (327 aa).

Residues 130-224 (LDEDTVVLDT…YGKDPEVQGE (95 aa)) form the Rhodanese domain. C184 functions as the Cysteine persulfide intermediate in the catalytic mechanism.

Belongs to the TrhO family.

It catalyses the reaction uridine(34) in tRNA + AH2 + O2 = 5-hydroxyuridine(34) in tRNA + A + H2O. In terms of biological role, catalyzes oxygen-dependent 5-hydroxyuridine (ho5U) modification at position 34 in tRNAs. The polypeptide is tRNA uridine(34) hydroxylase (Streptococcus thermophilus (strain CNRZ 1066)).